The primary structure comprises 239 residues: Small ribosomal subunit protein uS3 (239 aa).

Positions 39-109 (IRAMIQEIPE…KVQIKIKEVK (71 aa)) constitute a KH type-2 domain. Residues 219-239 (GALLKKQRRPRTEKPAQAGRQ) form a disordered region.

Belongs to the universal ribosomal protein uS3 family. As to quaternary structure, part of the 30S ribosomal subunit. Forms a tight complex with proteins S10 and S14.

Functionally, binds the lower part of the 30S subunit head. Binds mRNA in the 70S ribosome, positioning it for translation. This chain is Small ribosomal subunit protein uS3, found in Treponema denticola (strain ATCC 35405 / DSM 14222 / CIP 103919 / JCM 8153 / KCTC 15104).